The chain runs to 105 residues: CYIQNCPLGGKRAALDLDVRKCLPCGPGGKGRCFGPSICCGDELGCFVGTAEALRCQEENYLPSPCQSGQKPCGSGGRCAAAGICCSPDGCLADPSCHDEAAFSQ.

Cys-1 and Cys-6 form a disulfide bridge. Position 9 is a glycine amide (Gly-9). 7 disulfide bridges follow: Cys-22/Cys-66, Cys-25/Cys-39, Cys-33/Cys-56, Cys-40/Cys-46, Cys-73/Cys-85, Cys-79/Cys-97, and Cys-86/Cys-91.

This sequence belongs to the vasopressin/oxytocin family. As to quaternary structure, interacts with oxytocin receptor (Ki=1.5 nM). Interacts with vasopressin V1aR/AVPR1A (Ki=37 nM), V1bR/AVPR1B (Ki=222 nM), and V2R/AVPR2 receptors (Ki=823 nM).

The protein resides in the secreted. In terms of biological role, neurophysin 1 specifically binds oxytocin. Oxytocin causes contraction of the smooth muscle of the uterus and of the mammary gland. Acts by binding to oxytocin receptor (OXTR). This Equus caballus (Horse) protein is Oxytocin-neurophysin 1 (OXT).